The following is a 1099-amino-acid chain: ATP-dependent helicase/deoxyribonuclease subunit B (1099 aa).

[4Fe-4S] cluster contacts are provided by Cys766, Cys1056, Cys1059, and Cys1065.

Belongs to the helicase family. AddB/RexB type 2 subfamily. Heterodimer of AddA and RexB. Requires Mg(2+) as cofactor. It depends on [4Fe-4S] cluster as a cofactor.

Functionally, the heterodimer acts as both an ATP-dependent DNA helicase and an ATP-dependent, dual-direction single-stranded exonuclease. Recognizes the chi site generating a DNA molecule suitable for the initiation of homologous recombination. This subunit has 5' -&gt; 3' nuclease activity but not helicase activity. This is ATP-dependent helicase/deoxyribonuclease subunit B from Lactococcus lactis subsp. cremoris (strain SK11).